The sequence spans 452 residues: Coproporphyrinogen III oxidase, anaerobic 1 (452 aa).

The Radical SAM core domain maps to 45-278 (LDPAVPISVY…ANLAARLFTE (234 aa)). Tyr54 contacts S-adenosyl-L-methionine. [4Fe-4S] cluster-binding residues include Cys60 and Cys64. Phe66 contacts S-adenosyl-L-methionine. Cys67 contacts [4Fe-4S] cluster. Residues Gly111, 112–113 (GT), Glu144, Gln171, Arg183, and Asp208 contribute to the S-adenosyl-L-methionine site.

The protein belongs to the anaerobic coproporphyrinogen-III oxidase family. As to quaternary structure, monomer. [4Fe-4S] cluster serves as cofactor.

It localises to the cytoplasm. The enzyme catalyses coproporphyrinogen III + 2 S-adenosyl-L-methionine = protoporphyrinogen IX + 2 5'-deoxyadenosine + 2 L-methionine + 2 CO2. Its pathway is porphyrin-containing compound metabolism; protoporphyrin-IX biosynthesis; protoporphyrinogen-IX from coproporphyrinogen-III (AdoMet route): step 1/1. In terms of biological role, anaerobic transformation of coproporphyrinogen III into protoporphyrinogen IX. Dedicated to bacteriochlorophyll biosynthesis. The sequence is that of Coproporphyrinogen III oxidase, anaerobic 1 (hemN) from Cereibacter sphaeroides (strain ATCC 17023 / DSM 158 / JCM 6121 / CCUG 31486 / LMG 2827 / NBRC 12203 / NCIMB 8253 / ATH 2.4.1.) (Rhodobacter sphaeroides).